The primary structure comprises 251 residues: Ubiquinone/menaquinone biosynthesis C-methyltransferase UbiE (251 aa).

Residues threonine 74, aspartate 95, and 123–124 each bind S-adenosyl-L-methionine; that span reads NA.

It belongs to the class I-like SAM-binding methyltransferase superfamily. MenG/UbiE family.

The catalysed reaction is a 2-demethylmenaquinol + S-adenosyl-L-methionine = a menaquinol + S-adenosyl-L-homocysteine + H(+). It catalyses the reaction a 2-methoxy-6-(all-trans-polyprenyl)benzene-1,4-diol + S-adenosyl-L-methionine = a 5-methoxy-2-methyl-3-(all-trans-polyprenyl)benzene-1,4-diol + S-adenosyl-L-homocysteine + H(+). Its pathway is quinol/quinone metabolism; menaquinone biosynthesis; menaquinol from 1,4-dihydroxy-2-naphthoate: step 2/2. It participates in cofactor biosynthesis; ubiquinone biosynthesis. Methyltransferase required for the conversion of demethylmenaquinol (DMKH2) to menaquinol (MKH2) and the conversion of 2-polyprenyl-6-methoxy-1,4-benzoquinol (DDMQH2) to 2-polyprenyl-3-methyl-6-methoxy-1,4-benzoquinol (DMQH2). This chain is Ubiquinone/menaquinone biosynthesis C-methyltransferase UbiE, found in Shewanella sp. (strain ANA-3).